The following is a 154-amino-acid chain: Superoxide dismutase [Cu-Zn] (154 aa).

The Cu cation site is built by H47, H49, and H64. A disulfide bridge connects residues C58 and C147. Zn(2+) is bound by residues H64, H72, H81, and D84. H121 contacts Cu cation. The span at 126-137 shows a compositional bias: basic and acidic residues; sequence DLGRGGNEESKK. A disordered region spans residues 126 to 147; the sequence is DLGRGGNEESKKTGNAGPRPAC.

This sequence belongs to the Cu-Zn superoxide dismutase family. As to quaternary structure, homodimer. It depends on Cu cation as a cofactor. Zn(2+) serves as cofactor.

The protein localises to the cytoplasm. It catalyses the reaction 2 superoxide + 2 H(+) = H2O2 + O2. Its function is as follows. Destroys radicals which are normally produced within the cells and which are toxic to biological systems. Plays an important role in the phase transition, and may be important in vivo, as it would facilitate the intracellular survival of the fungus by providing a non-toxic environment in the macrophage phagolysosomes. The polypeptide is Superoxide dismutase [Cu-Zn] (Talaromyces marneffei (Penicillium marneffei)).